We begin with the raw amino-acid sequence, 331 residues long: Laforin (331 aa).

Residues M1–L124 enclose the CBM20 domain. At S25 the chain carries Phosphoserine; by AMPK. Residues W32, K87, G103 to D107, D197, D235, and R241 contribute to the substrate site. Positions H156–K323 constitute a Tyrosine-protein phosphatase domain. C266 acts as the Phosphocysteine intermediate in catalysis. The short motif at C266–R272 is the Glucan phosphatase signature motif CXAGXGR element. Residues N267–R272 and Y304 each bind substrate.

The protein belongs to the protein-tyrosine phosphatase family. In terms of assembly, homodimer. Interacts with itself. Interacts with PPP1R3B, PPP1R3C, PPP1R3D, HIRIP5, and EPM2AIP1. Binds glycogen and Lafora bodies. Interacts with NHLRC1/malin (via the NHL repeats). Forms a complex with NHLRC1/malin and HSP70. Interacts with PPP1R3D; in the presence of NHLC1/malin the interaction leads to ubiquitination and autophagic degradation of PPP1R3D. Interacts (via the phosphatase domain) with MAPT/Tau; the interaction dephosphorylates MAPT. Interacts with PRDM8. Polyubiquitinated by NHLRC1/malin. Post-translationally, phosphorylation on Ser-25 by AMPK affects the phosphatase activity of the enzyme and its ability to homodimerize and interact with NHLRC1, PPP1R3C or PRKAA2.

It is found in the cytoplasm. The protein resides in the endoplasmic reticulum membrane. The protein localises to the cell membrane. It catalyses the reaction O-phospho-L-tyrosyl-[protein] + H2O = L-tyrosyl-[protein] + phosphate. It carries out the reaction O-phospho-L-seryl-[protein] + H2O = L-seryl-[protein] + phosphate. The enzyme catalyses O-phospho-L-threonyl-[protein] + H2O = L-threonyl-[protein] + phosphate. Functionally, plays an important role in preventing glycogen hyperphosphorylation and the formation of insoluble aggregates, via its activity as glycogen phosphatase, and by promoting the ubiquitination of proteins involved in glycogen metabolism via its interaction with the E3 ubiquitin ligase NHLRC1/malin. Dephosphorylates phosphotyrosine and synthetic substrates, such as para-nitrophenylphosphate (pNPP), and has low activity with phosphoserine and phosphothreonine substrates (in vitro). Has also been shown to dephosphorylate MAPT. Shows strong phosphatase activity towards complex carbohydrates in vitro, avoiding glycogen hyperphosphorylation which is associated with reduced branching and formation of insoluble aggregates. Forms a complex with NHLRC1/malin and HSP70, which suppresses the cellular toxicity of misfolded proteins by promoting their degradation through the ubiquitin-proteasome system (UPS). Acts as a scaffold protein to facilitate PPP1R3C/PTG ubiquitination by NHLRC1/malin. Also promotes proteasome-independent protein degradation through the macroautophagy pathway. In Canis lupus familiaris (Dog), this protein is Laforin (EPM2A).